The primary structure comprises 215 residues: UPF0173 metal-dependent hydrolase NEQ378 (215 aa).

It belongs to the UPF0173 family.

The polypeptide is UPF0173 metal-dependent hydrolase NEQ378 (Nanoarchaeum equitans (strain Kin4-M)).